The primary structure comprises 399 residues: MTALPVTNRDTLPNLYDLSLAEMERLLTDWGQPTYRARQVFRQLYVNLADTPLAMTDLPLALRERLANETRLAPVTPEQVQTADNGLTRKALFRLPNGALVESVLMIYLDRATVCVSTQAGCAMGCVFCATGTLGLLRNLSPGEIVAQVVWAAREMRRLAGRPPRPTMRQPEDDAWWSPDDLENDAPSVPEVSSVSHVTNIVFMGMGEPFATYDRWWRAVEIIHDPRGLNIGARSMTVSTVGLVPGIRRLATETLPINLAVSLHAPDDDLRSALMPINRRYPLAVLLDATRDYLAATGRRVSFEYVLLQGKNDEPEHAAKLAALLRGEAGPAGLPLHLVHVNLIPWNPVPGMPLGRSERRRVLTFQRILRERGIACTVRVERGVAIAAACGQLAGGVAC.

Residue glutamate 102 is the Proton acceptor of the active site. Residues 108-385 (YLDRATVCVS…CTVRVERGVA (278 aa)) form the Radical SAM core domain. An intrachain disulfide couples cysteine 115 to cysteine 390. Residues cysteine 122, cysteine 126, and cysteine 129 each coordinate [4Fe-4S] cluster. Residues 207 to 208 (GE), serine 239, 262 to 264 (SLH), and asparagine 347 contribute to the S-adenosyl-L-methionine site. The active-site S-methylcysteine intermediate is cysteine 390.

Belongs to the radical SAM superfamily. RlmN family. [4Fe-4S] cluster is required as a cofactor.

Its subcellular location is the cytoplasm. The catalysed reaction is adenosine(2503) in 23S rRNA + 2 reduced [2Fe-2S]-[ferredoxin] + 2 S-adenosyl-L-methionine = 2-methyladenosine(2503) in 23S rRNA + 5'-deoxyadenosine + L-methionine + 2 oxidized [2Fe-2S]-[ferredoxin] + S-adenosyl-L-homocysteine. The enzyme catalyses adenosine(37) in tRNA + 2 reduced [2Fe-2S]-[ferredoxin] + 2 S-adenosyl-L-methionine = 2-methyladenosine(37) in tRNA + 5'-deoxyadenosine + L-methionine + 2 oxidized [2Fe-2S]-[ferredoxin] + S-adenosyl-L-homocysteine. Functionally, specifically methylates position 2 of adenine 2503 in 23S rRNA and position 2 of adenine 37 in tRNAs. This chain is Probable dual-specificity RNA methyltransferase RlmN, found in Roseiflexus castenholzii (strain DSM 13941 / HLO8).